Reading from the N-terminus, the 501-residue chain is Cobyric acid synthase (501 aa).

One can recognise a GATase cobBQ-type domain in the interval 253–450 (EIEIAVLKLP…LHGIFENGRW (198 aa)). Cys334 functions as the Nucleophile in the catalytic mechanism. His442 is an active-site residue.

Belongs to the CobB/CobQ family. CobQ subfamily.

The protein operates within cofactor biosynthesis; adenosylcobalamin biosynthesis. In terms of biological role, catalyzes amidations at positions B, D, E, and G on adenosylcobyrinic A,C-diamide. NH(2) groups are provided by glutamine, and one molecule of ATP is hydrogenolyzed for each amidation. The polypeptide is Cobyric acid synthase (Prochlorococcus marinus (strain MIT 9313)).